The primary structure comprises 483 residues: Protein P55 (483 aa).

A helical transmembrane segment spans residues 342–359 (LTPVMALIIILVYYSIYG).

The protein localises to the host membrane. The polypeptide is Protein P55 (Vitis vinifera (Grape)).